The sequence spans 631 residues: 1-deoxy-D-xylulose-5-phosphate synthase (631 aa).

Thiamine diphosphate is bound by residues His-87 and 128-130; that span reads GHS. Residue Asp-159 participates in Mg(2+) binding. Thiamine diphosphate-binding positions include 160–161, Asn-188, Phe-295, and Glu-377; that span reads GA. Residue Asn-188 coordinates Mg(2+).

It belongs to the transketolase family. DXPS subfamily. Homodimer. Mg(2+) serves as cofactor. Thiamine diphosphate is required as a cofactor.

The catalysed reaction is D-glyceraldehyde 3-phosphate + pyruvate + H(+) = 1-deoxy-D-xylulose 5-phosphate + CO2. Its pathway is metabolic intermediate biosynthesis; 1-deoxy-D-xylulose 5-phosphate biosynthesis; 1-deoxy-D-xylulose 5-phosphate from D-glyceraldehyde 3-phosphate and pyruvate: step 1/1. Catalyzes the acyloin condensation reaction between C atoms 2 and 3 of pyruvate and glyceraldehyde 3-phosphate to yield 1-deoxy-D-xylulose-5-phosphate (DXP). This Pseudomonas putida (strain ATCC 47054 / DSM 6125 / CFBP 8728 / NCIMB 11950 / KT2440) protein is 1-deoxy-D-xylulose-5-phosphate synthase.